A 148-amino-acid polypeptide reads, in one-letter code: Ribonuclease H (148 aa).

The 142-residue stretch at 1 to 142 (MSDSVELYTD…ADQLANRGVD (142 aa)) folds into the RNase H type-1 domain. Mg(2+)-binding residues include aspartate 10, glutamate 48, aspartate 70, and aspartate 134. Residues 129–148 (GNERADQLANRGVDEVRAKR) are disordered.

It belongs to the RNase H family. Monomer. The cofactor is Mg(2+).

The protein localises to the cytoplasm. It carries out the reaction Endonucleolytic cleavage to 5'-phosphomonoester.. Endonuclease that specifically degrades the RNA of RNA-DNA hybrids. This Pseudomonas putida (strain W619) protein is Ribonuclease H.